The sequence spans 168 residues: Large ribosomal subunit protein uL10 (168 aa).

The protein belongs to the universal ribosomal protein uL10 family. In terms of assembly, part of the ribosomal stalk of the 50S ribosomal subunit. The N-terminus interacts with L11 and the large rRNA to form the base of the stalk. The C-terminus forms an elongated spine to which L12 dimers bind in a sequential fashion forming a multimeric L10(L12)X complex.

Functionally, forms part of the ribosomal stalk, playing a central role in the interaction of the ribosome with GTP-bound translation factors. This is Large ribosomal subunit protein uL10 from Acidovorax ebreus (strain TPSY) (Diaphorobacter sp. (strain TPSY)).